A 453-amino-acid polypeptide reads, in one-letter code: Bifunctional protein GlmU (453 aa).

The pyrophosphorylase stretch occupies residues 1–225; it reads MNIVILAAGT…EWETLGVNSK (225 aa). Residues 6–9, K20, Q71, 76–77, 98–100, G135, E150, N165, and N223 contribute to the UDP-N-acetyl-alpha-D-glucosamine site; these read LAAG, GT, and YGD. Residue D100 coordinates Mg(2+). N223 is a Mg(2+) binding site. Positions 226–246 are linker; it reads AQLAELERIHQRNVADALLVD. Residues 247–453 are N-acetyltransferase; that stretch reads GVTLADPARV…GYVRPVKKKS (207 aa). UDP-N-acetyl-alpha-D-glucosamine is bound by residues R329 and K347. H359 serves as the catalytic Proton acceptor. Positions 362 and 373 each coordinate UDP-N-acetyl-alpha-D-glucosamine. Residues A376, 382-383, S401, and A419 contribute to the acetyl-CoA site; that span reads NY.

The protein in the N-terminal section; belongs to the N-acetylglucosamine-1-phosphate uridyltransferase family. It in the C-terminal section; belongs to the transferase hexapeptide repeat family. In terms of assembly, homotrimer. It depends on Mg(2+) as a cofactor.

The protein resides in the cytoplasm. It catalyses the reaction alpha-D-glucosamine 1-phosphate + acetyl-CoA = N-acetyl-alpha-D-glucosamine 1-phosphate + CoA + H(+). It carries out the reaction N-acetyl-alpha-D-glucosamine 1-phosphate + UTP + H(+) = UDP-N-acetyl-alpha-D-glucosamine + diphosphate. Its pathway is nucleotide-sugar biosynthesis; UDP-N-acetyl-alpha-D-glucosamine biosynthesis; N-acetyl-alpha-D-glucosamine 1-phosphate from alpha-D-glucosamine 6-phosphate (route II): step 2/2. It functions in the pathway nucleotide-sugar biosynthesis; UDP-N-acetyl-alpha-D-glucosamine biosynthesis; UDP-N-acetyl-alpha-D-glucosamine from N-acetyl-alpha-D-glucosamine 1-phosphate: step 1/1. The protein operates within bacterial outer membrane biogenesis; LPS lipid A biosynthesis. Its function is as follows. Catalyzes the last two sequential reactions in the de novo biosynthetic pathway for UDP-N-acetylglucosamine (UDP-GlcNAc). The C-terminal domain catalyzes the transfer of acetyl group from acetyl coenzyme A to glucosamine-1-phosphate (GlcN-1-P) to produce N-acetylglucosamine-1-phosphate (GlcNAc-1-P), which is converted into UDP-GlcNAc by the transfer of uridine 5-monophosphate (from uridine 5-triphosphate), a reaction catalyzed by the N-terminal domain. This chain is Bifunctional protein GlmU, found in Burkholderia orbicola (strain AU 1054).